The primary structure comprises 345 residues: Phosphoribosylformylglycinamidine cyclo-ligase (345 aa).

Belongs to the AIR synthase family.

The protein localises to the cytoplasm. The catalysed reaction is 2-formamido-N(1)-(5-O-phospho-beta-D-ribosyl)acetamidine + ATP = 5-amino-1-(5-phospho-beta-D-ribosyl)imidazole + ADP + phosphate + H(+). The protein operates within purine metabolism; IMP biosynthesis via de novo pathway; 5-amino-1-(5-phospho-D-ribosyl)imidazole from N(2)-formyl-N(1)-(5-phospho-D-ribosyl)glycinamide: step 2/2. In Shewanella denitrificans (strain OS217 / ATCC BAA-1090 / DSM 15013), this protein is Phosphoribosylformylglycinamidine cyclo-ligase.